Consider the following 325-residue polypeptide: MSEQAQAKRKVQIGDKLRGADKVRTIPMVNEETGYQRKPDWIRVRVPANGEIQRIKSLLRKQKLHTVCEEAACPNLPECFGGGTATFMIMGDICTRRCAFCDVGFGRPNALDAQEPLHLAESVENLGLNYVVITSVDRDDLADGGAEHFAECIRQVRALTPETRIEILTPDFRPCLDTAVEILAETAPDVFNHNIETVPELYKHIRPGARYQHSLDLLKRYKALRPDVSTKSGIMVGLGETFEQVINTIKDLRTHDVDMITIGQYLQPSKHHAPVDRFVHPDEFREYARVANELGFTSVASGPMVRSSYHADLQHKGVDVGLYKP.

[4Fe-4S] cluster is bound by residues cysteine 68, cysteine 73, cysteine 79, cysteine 94, cysteine 98, cysteine 101, and serine 308. The 218-residue stretch at phenylalanine 80–threonine 297 folds into the Radical SAM core domain.

Belongs to the radical SAM superfamily. Lipoyl synthase family. The cofactor is [4Fe-4S] cluster.

Its subcellular location is the cytoplasm. It carries out the reaction [[Fe-S] cluster scaffold protein carrying a second [4Fe-4S](2+) cluster] + N(6)-octanoyl-L-lysyl-[protein] + 2 oxidized [2Fe-2S]-[ferredoxin] + 2 S-adenosyl-L-methionine + 4 H(+) = [[Fe-S] cluster scaffold protein] + N(6)-[(R)-dihydrolipoyl]-L-lysyl-[protein] + 4 Fe(3+) + 2 hydrogen sulfide + 2 5'-deoxyadenosine + 2 L-methionine + 2 reduced [2Fe-2S]-[ferredoxin]. The protein operates within protein modification; protein lipoylation via endogenous pathway; protein N(6)-(lipoyl)lysine from octanoyl-[acyl-carrier-protein]: step 2/2. Its function is as follows. Catalyzes the radical-mediated insertion of two sulfur atoms into the C-6 and C-8 positions of the octanoyl moiety bound to the lipoyl domains of lipoate-dependent enzymes, thereby converting the octanoylated domains into lipoylated derivatives. In Alcanivorax borkumensis (strain ATCC 700651 / DSM 11573 / NCIMB 13689 / SK2), this protein is Lipoyl synthase.